We begin with the raw amino-acid sequence, 473 residues long: Catalase easC (473 aa).

The span at 1–15 shows a compositional bias: low complexity; sequence MASEVSVASSGSEHS. A disordered region spans residues 1 to 31; that stretch reads MASEVSVASSGSEHSGAQKCPFQDPGLSSMD. Residue H54 is part of the active site. Position 344 (Y344) interacts with heme. The tract at residues 369–388 is disordered; it reads DGARPEKAEMAPQKVPSQEH.

It belongs to the catalase family. Heme serves as cofactor.

It participates in alkaloid biosynthesis; ergot alkaloid biosynthesis. Catalase; part of the gene cluster that mediates the biosynthesis of fungal ergot alkaloid. DmaW catalyzes the first step of ergot alkaloid biosynthesis by condensing dimethylallyl diphosphate (DMAP) and tryptophan to form 4-dimethylallyl-L-tryptophan. The second step is catalyzed by the methyltransferase easF that methylates 4-dimethylallyl-L-tryptophan in the presence of S-adenosyl-L-methionine, resulting in the formation of 4-dimethylallyl-L-abrine. The catalase easC and the FAD-dependent oxidoreductase easE then transform 4-dimethylallyl-L-abrine to chanoclavine-I which is further oxidized by easD in the presence of NAD(+), resulting in the formation of chanoclavine-I aldehyde. Agroclavine dehydrogenase easG then mediates the conversion of chanoclavine-I aldehyde to agroclavine via a non-enzymatic adduct reaction: the substrate is an iminium intermediate that is formed spontaneously from chanoclavine-I aldehyde in the presence of glutathione. The presence of easA is not required to complete this reaction. Further conversion of agroclavine to paspalic acid is a two-step process involving oxidation of agroclavine to elymoclavine and of elymoclavine to paspalic acid, the second step being performed by the elymoclavine oxidase cloA. Paspalic acid is then further converted to D-lysergic acid. Ergopeptines are assembled from D-lysergic acid and three different amino acids by the D-lysergyl-peptide-synthetases composed each of a monomudular and a trimodular nonribosomal peptide synthetase subunit. LpsB and lpsC encode the monomodular subunits responsible for D-lysergic acid activation and incorporation into the ergopeptine backbone. LpsA1 and A2 subunits encode the trimodular nonribosomal peptide synthetase assembling the tripeptide portion of ergopeptines. LpsA1 is responsible for formation of the major ergopeptine, ergotamine, and lpsA2 for alpha-ergocryptine, the minor ergopeptine of the total alkaloid mixture elaborated by C.purpurea. D-lysergyl-tripeptides are assembled by the nonribosomal peptide synthetases and released as N-(D-lysergyl-aminoacyl)-lactams. Cyclolization of the D-lysergyl-tripeptides is performed by the Fe(2+)/2-ketoglutarate-dependent dioxygenase easH which introduces a hydroxyl group into N-(D-lysergyl-aminoacyl)-lactam at alpha-C of the aminoacyl residue followed by spontaneous condensation with the terminal lactam carbonyl group. The polypeptide is Catalase easC (Claviceps purpurea (Ergot fungus)).